Reading from the N-terminus, the 251-residue chain is Ribosome maturation factor RimP (251 aa).

Residues Asn-198–Asp-251 form a disordered region. Positions Lys-217 to Arg-234 are enriched in basic residues. Basic and acidic residues predominate over residues Leu-235–Ile-245.

The protein belongs to the RimP family.

Its subcellular location is the cytoplasm. Functionally, required for maturation of 30S ribosomal subunits. This Bradyrhizobium diazoefficiens (strain JCM 10833 / BCRC 13528 / IAM 13628 / NBRC 14792 / USDA 110) protein is Ribosome maturation factor RimP.